A 512-amino-acid polypeptide reads, in one-letter code: NAD-dependent deacetylase sir2A (512 aa).

The UBP-type zinc-finger motif lies at 7–110 (IECIHLKDEY…EILENIKSSN (104 aa)). Zn(2+)-binding residues include Cys9, His11, Cys34, Cys37, Cys46, Cys49, Cys54, His61, His65, His71, Cys84, and Cys87. Over residues 113 to 122 (DKIVPKKDQK) the composition is skewed to basic and acidic residues. Residues 113–196 (DKIVPKKDQK…DESSSEGEES (84 aa)) form a disordered region. The segment covering 130-175 (VVPSASITTSSTTTSISKQTTVNNTTTTSSSSTTTTTTTTSTTINN) has biased composition (low complexity). Residues 176-195 (NEEEEESESETDESSSEGEE) are compositionally biased toward acidic residues. The Deacetylase sirtuin-type domain occupies 231–503 (CVLKKPTIEE…LDLIKLLGWE (273 aa)). His361 serves as the catalytic Proton acceptor. Residues Cys369, Cys372, Cys393, and Cys399 each contribute to the Zn(2+) site.

Belongs to the sirtuin family. Zn(2+) is required as a cofactor.

It catalyses the reaction N(6)-acetyl-L-lysyl-[protein] + NAD(+) + H2O = 2''-O-acetyl-ADP-D-ribose + nicotinamide + L-lysyl-[protein]. Functionally, NAD-dependent deacetylase, which plays an important role in the regulation of transcriptional repression. The protein is NAD-dependent deacetylase sir2A (sir2A) of Dictyostelium discoideum (Social amoeba).